A 65-amino-acid chain; its full sequence is SPbeta prophage-derived uncharacterized protein YopU (65 aa).

The chain is SPbeta prophage-derived uncharacterized protein YopU (yopU) from Bacillus subtilis (strain 168).